The chain runs to 274 residues: NADPH-dependent 7-cyano-7-deazaguanine reductase (274 aa).

80–82 (VES) lines the substrate pocket. 82–83 (SK) contributes to the NADPH binding site. The active-site Thioimide intermediate is C181. Residue D188 is the Proton donor of the active site. Position 220–221 (220–221 (HE)) interacts with substrate. Position 249–250 (249–250 (RG)) interacts with NADPH.

Belongs to the GTP cyclohydrolase I family. QueF type 2 subfamily. Homodimer.

It is found in the cytoplasm. The enzyme catalyses 7-aminomethyl-7-carbaguanine + 2 NADP(+) = 7-cyano-7-deazaguanine + 2 NADPH + 3 H(+). It functions in the pathway tRNA modification; tRNA-queuosine biosynthesis. In terms of biological role, catalyzes the NADPH-dependent reduction of 7-cyano-7-deazaguanine (preQ0) to 7-aminomethyl-7-deazaguanine (preQ1). This is NADPH-dependent 7-cyano-7-deazaguanine reductase from Burkholderia ambifaria (strain ATCC BAA-244 / DSM 16087 / CCUG 44356 / LMG 19182 / AMMD) (Burkholderia cepacia (strain AMMD)).